A 385-amino-acid chain; its full sequence is Outer membrane porin protein BP0840 (385 aa).

The first 20 residues, M1–A20, serve as a signal peptide directing secretion.

The protein to bacterial outer membrane proteins and porins. In terms of assembly, homotrimer.

It localises to the cell outer membrane. Functionally, forms anion selective channels. The polypeptide is Outer membrane porin protein BP0840 (Bordetella pertussis (strain Tohama I / ATCC BAA-589 / NCTC 13251)).